The chain runs to 425 residues: UPF0597 protein Moth_1414 (425 aa).

Belongs to the UPF0597 family.

This chain is UPF0597 protein Moth_1414, found in Moorella thermoacetica (strain ATCC 39073 / JCM 9320).